The sequence spans 709 residues: Polyribonucleotide nucleotidyltransferase (709 aa).

Mg(2+) is bound by residues Asp-482 and Asp-488. In terms of domain architecture, KH spans 549–608 (PRIITMSIDPDKIREVIGPGGKVINKIIAETGVKIDIEDDGRIFIAATDTEAANKAVRII). One can recognise an S1 motif domain in the interval 618-686 (GKVYTGKVTR…KQGRINLSRK (69 aa)).

The protein belongs to the polyribonucleotide nucleotidyltransferase family. Mg(2+) is required as a cofactor.

It localises to the cytoplasm. It catalyses the reaction RNA(n+1) + phosphate = RNA(n) + a ribonucleoside 5'-diphosphate. Involved in mRNA degradation. Catalyzes the phosphorolysis of single-stranded polyribonucleotides processively in the 3'- to 5'-direction. The protein is Polyribonucleotide nucleotidyltransferase of Heliobacterium modesticaldum (strain ATCC 51547 / Ice1).